The following is a 268-amino-acid chain: MSNKVHLGHTARKRFGQNFLTDQGVISSIVGAIAPDNDHVMVEIGPGLGALTEPVADMIDNLTVVELDRDLVKRLQYHPVLKDKLTIHQGDALQFDFGQLQQPGKKMKVFGNLPYNISTPLMFHLFEFAEQIETMHFMLQKEVVLRLSASPGTKAYGRLTVMAQYYCQVVPVLEVPPTSFTPAPKVDSAVIRLLPFEVKPWPCKNVDVLRHLVTTAFNMRRKTLRNNLKTLLSDEDFAELQIDASLRPEQISVPQYVAMANMLCDKKD.

6 residues coordinate S-adenosyl-L-methionine: Asn18, Leu20, Gly45, Glu66, Asp91, and Asn112.

The protein belongs to the class I-like SAM-binding methyltransferase superfamily. rRNA adenine N(6)-methyltransferase family. RsmA subfamily.

It localises to the cytoplasm. The catalysed reaction is adenosine(1518)/adenosine(1519) in 16S rRNA + 4 S-adenosyl-L-methionine = N(6)-dimethyladenosine(1518)/N(6)-dimethyladenosine(1519) in 16S rRNA + 4 S-adenosyl-L-homocysteine + 4 H(+). Functionally, specifically dimethylates two adjacent adenosines (A1518 and A1519) in the loop of a conserved hairpin near the 3'-end of 16S rRNA in the 30S particle. May play a critical role in biogenesis of 30S subunits. This is Ribosomal RNA small subunit methyltransferase A from Shewanella frigidimarina (strain NCIMB 400).